A 427-amino-acid polypeptide reads, in one-letter code: Putative ABC transporter substrate-binding protein YesO (427 aa).

Belongs to the bacterial solute-binding protein 1 family.

In terms of biological role, may play a role in the degradation of type I rhamnogalacturonan derived from plant cell walls. The polypeptide is Putative ABC transporter substrate-binding protein YesO (yesO) (Bacillus subtilis (strain 168)).